The primary structure comprises 718 residues: MASGLAEESELSPGESELAVNPFDGLPFSSCYYELLEQRRALPIWAARFLFLEHLESSPTGVVLVSGDPGSGKSTQIPQWCAEFALARGFQTGQVTVTQPYPLAAMSLASRVADEMDLTLGHEIGYSIPQEDCTGPNTMLRFCWDRLFLQEVASTRGPGAWSVLILDEAQERSVASDLLQGLLRDTRLRNLPGDPRVVVVTDPALEPKFQAFWGNSPIVRVPREPGGDPTLAYKDTVPTDLVEAACQAVLELCQQEEAPGDVLVYLPSEEEISLCCESLSGEMGTLAVPGPPPRVLPLHPGCAQAIQTVYEDTDVSVRKIVVTHWLADFSFSLPSIQHVIDSGLELRSVYNPRIRAESQVLRPISKCQAEARLLRAKGFPPGSCLRLYSKSTLELEAPPLPHPKVCEENLSSLVLLLMRKQIAEPGECHFLDRPAPEALMRALEDLDYLAALNDDGELSDLGVILSEFPLPPELAKALLASCEFNCVDEMLTLAAMLTAAPGFTRPPLSAGEAALRRALEHADGDHSSLIQVYEAFVQSGADEAWCQARGLNWESLCQARKLRAELVELMQRIELPLSQPAFGSEQNRRDLQKALLSGYFLKVARDTDGTGNYLLLTHKHVAQLSPYCSYRNRRTPAQPPTWVLYHSFSISKDNCLCIVSEIQPEMLVELAPPYFLSNLPPSESRDLLNQLREGTAEPPAAATETSSPQEYGDGCVLQ.

The Helicase ATP-binding domain occupies 54–222 (HLESSPTGVV…WGNSPIVRVP (169 aa)). 67-74 (GDPGSGKS) provides a ligand contact to ATP. The DEAQ box signature appears at 167-170 (DEAQ). The 203-residue stretch at 245–447 (ACQAVLELCQ…ALMRALEDLD (203 aa)) folds into the Helicase C-terminal domain. The disordered stretch occupies residues 690-718 (QLREGTAEPPAAATETSSPQEYGDGCVLQ). Positions 696–708 (AEPPAAATETSSP) are enriched in low complexity.

In terms of tissue distribution, ubiquitous.

It localises to the nucleus. In terms of biological role, might be involved in RNA metabolism; it is missing helicase motif III and may not have helicase activity. This Mus musculus (Mouse) protein is ATP-dependent RNA helicase homolog DQX1 (Dqx1).